The chain runs to 780 residues: Tricorn protease-interacting factor F3 (780 aa).

Residues Glu-101 and 230-234 (GAMEN) each bind substrate. Residue His-265 coordinates Zn(2+). Catalysis depends on Glu-266, which acts as the Proton acceptor. The Zn(2+) site is built by His-269 and Glu-288.

This sequence belongs to the peptidase M1 family. As to quaternary structure, part of the tricorn proteolytic complex. It depends on Zn(2+) as a cofactor.

The protein resides in the cytoplasm. In terms of biological role, proteases F1, F2 and F3 degrade oligopeptides produced by Tricorn (themselves probably produced by the proteasome), yielding free amino acids. The protein is Tricorn protease-interacting factor F3 (trf3) of Thermoplasma acidophilum (strain ATCC 25905 / DSM 1728 / JCM 9062 / NBRC 15155 / AMRC-C165).